We begin with the raw amino-acid sequence, 268 residues long: Tetraspanin-5 (268 aa).

Residues 1-17 (MSGKHYKGPEVSCCIKY) are Cytoplasmic-facing. The helical transmembrane segment at 18-38 (FIFGFNVIFWFLGIAFLGIGL) threads the bilayer. Residues 39–61 (WAWNEKGVLSNISSITDLGGFDP) lie on the Extracellular side of the membrane. An N-linked (GlcNAc...) asparagine glycan is attached at N49. A helical membrane pass occupies residues 62-82 (VWLFLVVGGVMFILGFAGCIG). Residues 83–92 (ALRENTFLLK) lie on the Cytoplasmic side of the membrane. The chain crosses the membrane as a helical span at residues 93 to 113 (FFSVFLGIIFFLELTAGVLAF). At 114 to 232 (VFKDWIKDQL…PQFEKWLQDN (119 aa)) the chain is on the extracellular side. 4 cysteine pairs are disulfide-bonded: C153–C221, C154–C186, C170–C180, and C187–C200. Residues N169 and N174 are each glycosylated (N-linked (GlcNAc...) asparagine). N-linked (GlcNAc...) asparagine glycosylation occurs at N232. The chain crosses the membrane as a helical span at residues 233 to 253 (LTIVAGIFIGIALLQIFGICL). Over 254–268 (AQNLVSDIEAVRASW) the chain is Cytoplasmic.

Belongs to the tetraspanin (TM4SF) family. Interacts with ADAM10; the interaction influences ADAM10 substrate specificity, endocytosis and turnover. Palmitoylated.

It is found in the cell membrane. Its function is as follows. Part of TspanC8 subgroup, composed of 6 members that interact with the transmembrane metalloprotease ADAM10. This interaction is required for ADAM10 exit from the endoplasmic reticulum and for enzymatic maturation and trafficking to the cell surface as well as substrate specificity. Different TspanC8/ADAM10 complexes have distinct substrates. Promotes ADAM10-mediated cleavage of CD44. Seems to regulate VE-cadherin expression in endothelial cells probably through interaction with ADAM10, promoting leukocyte transmigration. This is Tetraspanin-5 (TSPAN5) from Bos taurus (Bovine).